Here is a 237-residue protein sequence, read N- to C-terminus: MTPQAFYQVLIEHGITLTDKQKKQFETYFRLLVEWNEKINLTAITDKEEVYLKHFYDSIAPILQGYIDNSPLSILDIGAGAGFPSIPMKILYPEIDITIIDSLNKRINFLNILANELELSGVHFFHGRAEDFGQDKVFRAKFDIVTARAVARMQVLAELTIPFLKVNGRLIALKAAAAEEELISAEKALKTLFSQVTVNKNYKLPNGDDRNITIVSKKKETPNKYPRKAGTPNKKPL.

S-adenosyl-L-methionine contacts are provided by residues glycine 78, phenylalanine 83, 129–130, and arginine 148; that span reads AE. The interval 216–237 is disordered; the sequence is SKKKETPNKYPRKAGTPNKKPL.

The protein belongs to the methyltransferase superfamily. RNA methyltransferase RsmG family.

Its subcellular location is the cytoplasm. Specifically methylates the N7 position of a guanine in 16S rRNA. In Streptococcus agalactiae serotype III (strain NEM316), this protein is Ribosomal RNA small subunit methyltransferase G.